The chain runs to 171 residues: Lipoprotein signal peptidase (171 aa).

The next 4 membrane-spanning stretches (helical) occupy residues 15–35, 47–67, 72–92, and 107–127; these read WLWL…IVMD, VLPF…SFLS, WQRW…AYWM, and ALII…GFVV. Catalysis depends on residues D128 and D146. A helical membrane pass occupies residues 141–161; sequence AFNLADSTICIGAAMIILDGF.

This sequence belongs to the peptidase A8 family.

It localises to the cell inner membrane. It catalyses the reaction Release of signal peptides from bacterial membrane prolipoproteins. Hydrolyzes -Xaa-Yaa-Zaa-|-(S,diacylglyceryl)Cys-, in which Xaa is hydrophobic (preferably Leu), and Yaa (Ala or Ser) and Zaa (Gly or Ala) have small, neutral side chains.. The protein operates within protein modification; lipoprotein biosynthesis (signal peptide cleavage). This protein specifically catalyzes the removal of signal peptides from prolipoproteins. The protein is Lipoprotein signal peptidase of Vibrio cholerae serotype O1 (strain ATCC 39541 / Classical Ogawa 395 / O395).